A 249-amino-acid chain; its full sequence is 2,3-bisphosphoglycerate-dependent phosphoglycerate mutase (249 aa).

Residues 8-15 (RHGESTWN), 21-22 (TG), arginine 60, 87-90 (ERHY), lysine 98, 114-115 (RR), and 183-184 (GN) contribute to the substrate site. Histidine 9 functions as the Tele-phosphohistidine intermediate in the catalytic mechanism. Glutamate 87 acts as the Proton donor/acceptor in catalysis.

Belongs to the phosphoglycerate mutase family. BPG-dependent PGAM subfamily. In terms of assembly, homodimer.

It catalyses the reaction (2R)-2-phosphoglycerate = (2R)-3-phosphoglycerate. The protein operates within carbohydrate degradation; glycolysis; pyruvate from D-glyceraldehyde 3-phosphate: step 3/5. Functionally, catalyzes the interconversion of 2-phosphoglycerate and 3-phosphoglycerate. The chain is 2,3-bisphosphoglycerate-dependent phosphoglycerate mutase from Burkholderia mallei (strain NCTC 10247).